The chain runs to 267 residues: 5'-nucleotidase SurE (267 aa).

Residues Asp14, Asp15, Ser45, and Asn100 each contribute to the a divalent metal cation site.

It belongs to the SurE nucleotidase family. A divalent metal cation serves as cofactor.

It localises to the cytoplasm. It catalyses the reaction a ribonucleoside 5'-phosphate + H2O = a ribonucleoside + phosphate. Its function is as follows. Nucleotidase that shows phosphatase activity on nucleoside 5'-monophosphates. This Methanosarcina barkeri (strain Fusaro / DSM 804) protein is 5'-nucleotidase SurE.